Consider the following 485-residue polypeptide: Noelin (485 aa).

The N-terminal stretch at 1 to 16 is a signal peptide; the sequence is MSVPLLKIGVVLSTMA. Asparagine 33, asparagine 103, asparagine 187, asparagine 288, asparagine 307, asparagine 394, asparagine 431, and asparagine 473 each carry an N-linked (GlcNAc...) asparagine glycan. A coiled-coil region spans residues 87 to 225; the sequence is RDARTKQLRQ…ERLRACMQKL (139 aa). The 253-residue stretch at 226 to 478 folds into the Olfactomedin-like domain; the sequence is ACGKLTGISD…QILYNVTLFH (253 aa). Cysteine 227 and cysteine 409 are oxidised to a cystine.

In terms of assembly, homotetramer; disulfide-linked. Dimer of dimers, giving rise to a V-shaped homotretramer. Isoform 1 and isoform 3 interact with RTN4R. Identified in a complex with RTN4R and LINGO1. Peripherally associated with AMPAR complex. AMPAR complex consists of an inner core made of 4 pore-forming GluA/GRIA proteins (GRIA1, GRIA2, GRIA3 and GRIA4) and 4 major auxiliary subunits arranged in a twofold symmetry. One of the two pairs of distinct binding sites is occupied either by CNIH2, CNIH3 or CACNG2, CACNG3. The other harbors CACNG2, CACNG3, CACNG4, CACNG8 or GSG1L. This inner core of AMPAR complex is complemented by outer core constituents binding directly to the GluA/GRIA proteins at sites distinct from the interaction sites of the inner core constituents. Outer core constituents include at least PRRT1, PRRT2, CKAMP44/SHISA9, FRRS1L and NRN1. The proteins of the inner and outer core serve as a platform for other, more peripherally associated AMPAR constituents, including OLFM1. Alone or in combination, these auxiliary subunits control the gating and pharmacology of the AMPAR complex and profoundly impact their biogenesis and protein processing. Interacts with OLFM2.

The protein resides in the secreted. The protein localises to the synapse. Its subcellular location is the endoplasmic reticulum. It localises to the cell projection. It is found in the axon. The protein resides in the perikaryon. Functionally, contributes to the regulation of axonal growth in the embryonic and adult central nervous system by inhibiting interactions between RTN4R and LINGO1. Inhibits RTN4R-mediated axon growth cone collapse. May play an important role in regulating the production of neural crest cells by the neural tube. May be required for normal responses to olfactory stimuli. In Homo sapiens (Human), this protein is Noelin (OLFM1).